The chain runs to 141 residues: Hemoglobin subunit alpha-1/2 (141 aa).

The Globin domain maps to 1–141; it reads VLSPADKTNV…VSTVLTSKYR (141 aa). Serine 3 is modified (phosphoserine). Residue lysine 7 is modified to N6-succinyllysine. At threonine 8 the chain carries Phosphothreonine. Lysine 11 is subject to N6-succinyllysine. Position 16 is an N6-acetyllysine; alternate (lysine 16). Lysine 16 is modified (N6-succinyllysine; alternate). Tyrosine 24 bears the Phosphotyrosine mark. A Phosphoserine modification is found at serine 35. Lysine 40 carries the post-translational modification N6-succinyllysine. The residue at position 49 (serine 49) is a Phosphoserine. Histidine 58 serves as a coordination point for O2. Histidine 87 contributes to the heme b binding site. Residue serine 102 is modified to Phosphoserine. At threonine 108 the chain carries Phosphothreonine. Serine 124 carries the phosphoserine modification. Threonine 134 and threonine 137 each carry phosphothreonine. The residue at position 138 (serine 138) is a Phosphoserine.

Belongs to the globin family. As to quaternary structure, heterotetramer of two alpha chains and two beta chains. In terms of tissue distribution, red blood cells.

Involved in oxygen transport from the lung to the various peripheral tissues. The polypeptide is Hemoglobin subunit alpha-1/2 (Mustela lutreola (European mink)).